Reading from the N-terminus, the 656-residue chain is MQGNRDGSWSLRASAYGGSGNGNGGYLPQTTPVFHNYIVKQQQPIRYNFQTQQNLNFPHPQFGGGANVELIRIDKAVNNTRKSLIAAGDNVSSTRVSQSVLAQLQADTWRSLGIWMQDVPSLRQLMALEGKIIAFIHCFIGARGIVTLHDLEVAICQNEFVGCFDDLGLGPLLQHPLVLLYFPSVYCSTAPVKITSEEIISLLDSYLNTYDIDDVKLDEFLDFVAEAKAVTSKEKLGVRIQNLRMYVSFIQDAKRQEGEILKIVLTELHQKYRILSSKKQRQDKDYCGKHTRFNSPSSEENDSADYEVENVKRSDHFSSCPYSSAEEEVKQLGSSSKKRKAESRNHEKSDSPKLLRRGPSKLRRGHVKQKIPKSADDSDAQIFSVNDADFTLSEGALKLFISTWKETCKELSISVFVKKLLSFYNLGGSEVHGQIKIATAVSSFPFVGLLHVAKELVTEALEEQIPTEITITNLVAGYNDCTGTRSRANMPNPTKSCSTPVTLAHNSVSTDFSIRNQLHTGALWAAQAQESGKKGEEIAYRYFVAKYGKKALVKWVNEHSETGLPYDLIIENRGGNKEYVEVKATVSTGKDYFNLSVKEWEFANEKGESYVIAHVLLGNSNAILTQQRNLVKLRQDGHLRLLILMPSQRNEVNVAF.

Residues 283–375 (DKDYCGKHTR…HVKQKIPKSA (93 aa)) are disordered. The span at 299-308 (EENDSADYEV) shows a compositional bias: acidic residues. Positions 342–353 (ESRNHEKSDSPK) are enriched in basic and acidic residues. Residues 354–371 (LLRRGPSKLRRGHVKQKI) are compositionally biased toward basic residues.

In Arabidopsis thaliana (Mouse-ear cress), this protein is Protein NO VEIN-LIKE.